Here is a 431-residue protein sequence, read N- to C-terminus: MSKILIRAMVLPMTGPEDFYPEGEIGIENDRILFVGEKGSAPDSFIPDQIIDLPEDVVMPGLINTHTHAAMTMLRSYADDLPLMPWLQTKIWPFEDKMSDEDIYWGTLLALGEMIQSGTTTMLDMYASMDQVAKAVLEAGTRGVLSRGLIGNAPNGERAFAENMDLVKNYHGAGQGRIQVMFGPHAPYTCSGEFLQRVKQEADRLGVGIHIHVAETEDEIKTIKEQYGKTPVQWLEELGLFGGHVVAAHCVHLTEEDQEIMAQNKVFIAHNPESNMKLNSGTAPIPELRSRGVVVGLGTDGTSSNNNLDMFGEMRSAAFQQKLVKGATALPAYEVLQMATVDGARTLGLHDVGVLAPGYKADLISINFDQPHFYPRFSIPAHLVYVAHAGDVRTVMVDGKILMQERQLMTIDIKRVCREVEKRAKGIAQGL.

Zn(2+)-binding residues include His66 and His68. Substrate is bound by residues Glu95, Arg147, and His185. His212 serves as a coordination point for Zn(2+). Glu215 and Asp300 together coordinate substrate. Asp300 is a binding site for Zn(2+).

The protein belongs to the metallo-dependent hydrolases superfamily. MTA/SAH deaminase family. The cofactor is Zn(2+).

The catalysed reaction is S-adenosyl-L-homocysteine + H2O + H(+) = S-inosyl-L-homocysteine + NH4(+). The enzyme catalyses S-methyl-5'-thioadenosine + H2O + H(+) = S-methyl-5'-thioinosine + NH4(+). Its function is as follows. Catalyzes the deamination of 5-methylthioadenosine and S-adenosyl-L-homocysteine into 5-methylthioinosine and S-inosyl-L-homocysteine, respectively. Is also able to deaminate adenosine. The chain is 5-methylthioadenosine/S-adenosylhomocysteine deaminase from Desulfitobacterium hafniense (strain DSM 10664 / DCB-2).